We begin with the raw amino-acid sequence, 659 residues long: Siderophore transporter fer7 (659 aa).

Residues 1–62 (MSNQAQDQPE…ADASSAREGQ (62 aa)) are disordered. The span at 31–41 (QSVSAHGNTSL) shows a compositional bias: polar residues. An N-linked (GlcNAc...) asparagine glycan is attached at Asn38. The span at 42–54 (NKKDRVSAVRDAD) shows a compositional bias: basic and acidic residues. A run of 8 helical transmembrane segments spans residues 79-99 (NSPI…CFAL), 121-141 (LFGV…PFIA), 150-170 (QTAY…VASA), 208-228 (GVVT…GNLI), 245-265 (GMFA…LMYV), 316-336 (LVGL…FSIY), 348-368 (IIAM…WEIL), and 379-399 (VWYN…FMGG). N-linked (GlcNAc...) asparagine glycosylation occurs at Asn415. 2 helical membrane passes run 424 to 444 (VVNA…GFYL) and 451 to 471 (KFLQ…YLYG). N-linked (GlcNAc...) asparagine glycosylation occurs at Asn475. A run of 3 helical transmembrane segments spans residues 478-498 (TMVV…SVVG), 528-548 (AIGS…YLAA), and 590-610 (PIFI…LLMP).

Belongs to the major facilitator superfamily.

The protein resides in the membrane. In terms of biological role, siderophore transporter; part of the gene cluster that mediates the biosynthesis of siderophore ferrichrome A which is contributing to organismal virulence. This Mycosarcoma maydis (Corn smut fungus) protein is Siderophore transporter fer7.